The sequence spans 246 residues: Acetoacetate decarboxylase (246 aa).

Residue K116 is the Schiff-base intermediate with acetoacetate of the active site.

The protein belongs to the ADC family.

It carries out the reaction acetoacetate + H(+) = acetone + CO2. Functionally, catalyzes the conversion of acetoacetate to acetone and carbon dioxide. This Burkholderia lata (strain ATCC 17760 / DSM 23089 / LMG 22485 / NCIMB 9086 / R18194 / 383) protein is Acetoacetate decarboxylase.